Here is a 293-residue protein sequence, read N- to C-terminus: Actin-related protein 2/3 complex subunit 2 (293 aa).

It belongs to the ARPC2 family. In terms of assembly, component of the Arp2/3 complex composed of arpB/Arp2, arpC/Arp3, arcA/p41-arc, arcB/p34-arc, arcC/p21-arc, arcD/p20-arc and arcE/p16-arc. Interacts with carmil (via the region between the LRR domain and COOH-terminal proline-rich domain); carmil is required for Arp2/3-dependent actin nucleation. Arp2/3 complex, MyoB, MyoC, and the alpha and beta subunits of capping protein all form a larger complex with carmil.

The protein localises to the cytoplasm. It localises to the cytoskeleton. Its subcellular location is the cell projection. It is found in the cytosol. The protein resides in the cell cortex. The protein localises to the pseudopodium. In terms of biological role, functions as a component of the Arp2/3 complex which is involved in regulation of actin polymerization and together with an activating nucleation-promoting factor (NPF) mediates the formation of branched actin networks. Seems to contact the pointed end of the daughter actin filament. The Arp2/3 complex is involved in organizing the actin system in cell motility and chemotaxis, in phagocytosis and macropinocytosis, at late steps of endosome processing, and in mitosis. In concert with a group of other proteins, the Arp2/3 complex plays a general role in the rapid activation and adaptation of the actin system to its multiple functions. This chain is Actin-related protein 2/3 complex subunit 2 (arcB), found in Dictyostelium discoideum (Social amoeba).